Here is a 377-residue protein sequence, read N- to C-terminus: tRNA-specific 2-thiouridylase MnmA (377 aa).

ATP-binding positions include Gly-18 to Ser-25 and Met-44. The interval Asn-104 to Asp-106 is interaction with target base in tRNA. Cys-109 serves as the catalytic Nucleophile. Cys-109 and Cys-209 form a disulfide bridge. Gly-134 contributes to the ATP binding site. The interaction with tRNA stretch occupies residues Lys-159 to Gln-161. The active-site Cysteine persulfide intermediate is the Cys-209. Residues Arg-324–Tyr-325 are interaction with tRNA.

It belongs to the MnmA/TRMU family.

Its subcellular location is the cytoplasm. The enzyme catalyses S-sulfanyl-L-cysteinyl-[protein] + uridine(34) in tRNA + AH2 + ATP = 2-thiouridine(34) in tRNA + L-cysteinyl-[protein] + A + AMP + diphosphate + H(+). In terms of biological role, catalyzes the 2-thiolation of uridine at the wobble position (U34) of tRNA, leading to the formation of s(2)U34. The protein is tRNA-specific 2-thiouridylase MnmA of Photobacterium profundum (strain SS9).